The sequence spans 342 residues: Hypoxia responsive morphology factor C (342 aa).

The Bipartite nuclear localization signal signature appears at 46-68; that stretch reads RMKIPRRKSEYSSHDRLKRARKI. Residues 151 to 181 form an RNA recognition motif (RRM)-like domain region; that stretch reads ADDAWAYNAADMDTAVKFFSEAIYKAIESSP.

Belongs to the hrmA family.

Its subcellular location is the nucleus. Its function is as follows. Probably modulates the generation of the hypoxia-typic morphotype (called H-MORPH) with altered biofilm architecture that leads to increased host inflammation, rapid disease progression, and mortality in a murine model of invasive aspergillosis. The chain is Hypoxia responsive morphology factor C from Aspergillus fumigatus (strain CBS 144.89 / FGSC A1163 / CEA10) (Neosartorya fumigata).